Reading from the N-terminus, the 817-residue chain is Protein TOC75, chloroplastic (817 aa).

The N-terminal 31 residues, 1-31 (MALTSQSLFFSPLAAGPSRRVRGRGRSTSVS), are a transit peptide targeting the chloroplast. The disordered stretch occupies residues 14-59 (AAGPSRRVRGRGRSTSVSAAASASSHNSQPHGHPQQPLAVASSSSK). Residues 26–38 (RSTSVSAAASASS) show a composition bias toward low complexity. The N-terminal 104 residues, 32 to 135 (AAASASSHNS…RIFSGGAAHA (104 aa)), are a transit peptide targeting the chloroplast; outer membrane. The Chloroplast intermembrane portion of the chain corresponds to 136 to 147 (DEKSSGDWDPHG). Residues 148 to 156 (LPANINVPM) traverse the membrane as a beta stranded segment. Topologically, residues 157–164 (TKLSGLKR) are cytoplasmic. Residues 165–173 (YKISELKFF) traverse the membrane as a beta stranded segment. The Chloroplast intermembrane segment spans residues 174-232 (DRAAGGGGAFTGPEDSFFEMVTLQPGGVYTKSQLLKELETLVSCGMFERVDLEGKAKPD). The chain crosses the membrane as a beta stranded span at residues 233–241 (GTLGLTVSF). At 242-254 (VESVWSAAKQFKC) the chain is on the cytoplasmic side. Residues 255–261 (INVGLMS) form a beta stranded membrane-spanning segment. Topologically, residues 262–364 (QSGQVDFDQD…VVCEVVEGDI (103 aa)) are chloroplast intermembrane. A beta stranded membrane pass occupies residues 365–372 (TKVEYQFQ). Over 373–417 (DKLGNFVEGNTQIPIIDRELPQQLRPGHIFNIGAGKQALKNINSL) the chain is Cytoplasmic. A beta stranded transmembrane segment spans residues 418 to 425 (ALFSNIEV). At 426 to 434 (NPRPDETKE) the chain is on the chloroplast intermembrane side. The beta stranded transmembrane segment at 435–443 (GGIVVEIKL) threads the bilayer. Residues 444–449 (KELEPK) are Cytoplasmic-facing. The beta stranded transmembrane segment at 450–459 (SAEVSTEWSI) threads the bilayer. Residues 460–471 (VPGREGRPTLAS) lie on the Chloroplast intermembrane side of the membrane. Residues 472 to 480 (IQPGGTVSF) form a beta stranded membrane-spanning segment. Over 481 to 507 (EHRNIYGLNRSIVGSVTSSNLLNPQDD) the chain is Cytoplasmic. The beta stranded transmembrane segment at 508-516 (LSFKLEYVH) threads the bilayer. The Chloroplast intermembrane segment spans residues 517–561 (PYLDGVDDRNKNRTFKTSCFNTRKLSPVFVAGPNMDEAPPVWVDR). A beta stranded membrane pass occupies residues 562–569 (VGFKANIT). Topologically, residues 570 to 577 (ESFTRQSK) are cytoplasmic. Residues 578 to 585 (FTYGLVVE) form a beta stranded membrane-spanning segment. Over 586–692 (EITTRDETNS…QEKGAGKPLP (107 aa)) the chain is Chloroplast intermembrane. The chain crosses the membrane as a beta stranded span at residues 693–701 (AVLVLHGHY). Over 702–713 (AGCVGDLPSYDA) the chain is Cytoplasmic. Residues 714–722 (FTLGGPYSV) traverse the membrane as a beta stranded segment. Residues 723-784 (RGYGMGELGA…FFRRVGHGSS (62 aa)) are Chloroplast intermembrane-facing. A beta stranded membrane pass occupies residues 785-791 (YGLGVKL). Residues 792-805 (GLVRGEYIVDHNAG) are Cytoplasmic-facing. A beta stranded transmembrane segment spans residues 806 to 813 (TGTVFFRF). Topologically, residues 814-817 (GERF) are chloroplast intermembrane.

Belongs to the TOC75 family. As to quaternary structure, part of the TOC core complex that includes a protein for the specific recognition of transit peptides surrounded by a ring composed of four proteins forming translocation channels, and four to five GTP-binding proteins providing energy. This core complex can interact with components of the TIC complex to form a larger import complex. Chloroplastic protein precursors also interact with these complexes.

It localises to the plastid. The protein resides in the chloroplast outer membrane. Functionally, mediates the insertion of proteins targeted to the outer membrane of chloroplasts. Required for the import of protein precursors into chloroplasts. Forms the voltage-dependent preprotein translocation channels (hydrophilic beta barrel) of the TOC complex in the chloroplastic outer membrane. This chain is Protein TOC75, chloroplastic (TOC75), found in Oryza sativa subsp. japonica (Rice).